The following is a 732-amino-acid chain: Prolyl 3-hydroxylase 3 (732 aa).

The N-terminal stretch at 1–19 (MLRLLRLLLLLLLPPPGSP) is a signal peptide. Over residues 15 to 25 (PPGSPEPPEPP) the composition is skewed to pro residues. Residues 15-35 (PPGSPEPPEPPGLAQLSPGSP) form a disordered region. TPR repeat units lie at residues 39-72 (PDLL…RAAL), 152-185 (REPY…NPTH), 214-247 (YWAA…SLAH), and 312-345 (LSQL…YPED). N-linked (GlcNAc...) asparagine glycosylation is found at N327 and N458. In terms of domain architecture, Fe2OG dioxygenase spans 557-671 (THLVCRSAIE…RCALALWHTW (115 aa)). Residues H580, D582, and H652 each coordinate Fe cation. The active site involves R662. Residues 674–703 (EHSEQEWTEAKELLQEEEEEEEEEDILSRD) adopt a coiled-coil conformation. Positions 676 to 687 (SEQEWTEAKELL) are enriched in basic and acidic residues. Residues 676-732 (SEQEWTEAKELLQEEEEEEEEEDILSRDPSPEPPSHKLQRVQEKAGKPRRVRVREEL) are disordered. The span at 688–698 (QEEEEEEEEED) shows a compositional bias: acidic residues. The span at 722-732 (KPRRVRVREEL) shows a compositional bias: basic residues. The Prevents secretion from ER signature appears at 729 to 732 (REEL).

This sequence belongs to the leprecan family. Identified in a complex with PLOD1 and P3H4. It depends on Fe cation as a cofactor. Requires L-ascorbate as cofactor. As to expression, detected in kidney (at protein level).

Its subcellular location is the endoplasmic reticulum. It carries out the reaction L-prolyl-[collagen] + 2-oxoglutarate + O2 = trans-3-hydroxy-L-prolyl-[collagen] + succinate + CO2. Functionally, part of a complex composed of PLOD1, P3H3 and P3H4 that catalyzes hydroxylation of lysine residues in collagen alpha chains and is required for normal assembly and cross-linkling of collagen fibrils. Required for normal hydroxylation of lysine residues in type I collagen chains in skin, bone, tendon, aorta and cornea. Required for normal skin stability via its role in hydroxylation of lysine residues in collagen alpha chains and in collagen fibril assembly. Apparently not required for normal prolyl 3-hydroxylation on collagen chains, possibly because it functions redundantly with other prolyl 3-hydroxylases. The protein is Prolyl 3-hydroxylase 3 of Mus musculus (Mouse).